The chain runs to 69 residues: Sperm protamine P1 (69 aa).

2 stretches are compositionally biased toward basic residues: residues 1 to 30 and 37 to 69; these read MARF…RRGG and KITR…RRRN. The segment at 1–69 is disordered; the sequence is MARFRPSRSR…SRRRRRRRRN (69 aa).

Belongs to the protamine P1 family. Testis.

The protein localises to the nucleus. It is found in the chromosome. Protamines substitute for histones in the chromatin of sperm during the haploid phase of spermatogenesis. They compact sperm DNA into a highly condensed, stable and inactive complex. The sequence is that of Sperm protamine P1 (PRM1) from Tachyglossus aculeatus aculeatus (Southeast Australian short-beaked echidna).